A 64-amino-acid chain; its full sequence is Large ribosomal subunit protein bL33 (64 aa).

Positions 16-25 are enriched in basic and acidic residues; that stretch reads EARTSSEPRR. The tract at residues 16-41 is disordered; that stretch reads EARTSSEPRRSNGVSRYTTEKNKRNT.

This sequence belongs to the bacterial ribosomal protein bL33 family.

In Prochlorococcus marinus subsp. pastoris (strain CCMP1986 / NIES-2087 / MED4), this protein is Large ribosomal subunit protein bL33.